The primary structure comprises 170 residues: Protein SprT (170 aa).

A SprT-like domain is found at 22–163 (LQQANLTLQT…RCRRCGKTLR (142 aa)). His-78 lines the Zn(2+) pocket. The active site involves Glu-79. Residue His-82 participates in Zn(2+) binding.

It belongs to the SprT family. Zn(2+) is required as a cofactor.

It localises to the cytoplasm. This chain is Protein SprT, found in Pectobacterium atrosepticum (strain SCRI 1043 / ATCC BAA-672) (Erwinia carotovora subsp. atroseptica).